Consider the following 378-residue polypeptide: MTAPYACQPEESRGRRWPERMSTFRSPWQRDRDRIIHSSAFRRLKHKTQVFVEHEGDYYRTRLTHTIEVAQVARTIAGALGLNTDLAETVALAHDLGHPPFGHTGEDALAALMAPYGGFDHNAQALRIVTRLERHYADFDGLNLTWESLEGIAKHNGPVTGDLPYALAEVNAEWDLELHTNASAEAQVAAVADDVAYNHHDLHDGLRAGLFTEADLAELPVVGEALARVDALHPGLEPMRRRHEALRRVFGVMVEDVIAVAQNRLASLQPQNVQEIRDMEGPIIRFSKPLYQNLKAIKLFLFQRMYRAPSVVVERRRVTEMLNGLFPLFLDDPSKMPRTWFQAAEAAGDETGRARVVLDYVAGMTDRFAIQEAQRLLG.

Residues 62–198 (RLTHTIEVAQ…AAVADDVAYN (137 aa)) enclose the HD domain.

The protein belongs to the dGTPase family. Type 2 subfamily.

This chain is Deoxyguanosinetriphosphate triphosphohydrolase-like protein, found in Paracoccus denitrificans (strain Pd 1222).